Consider the following 507-residue polypeptide: Cobyric acid synthase (507 aa).

Residues 251–448 (DIDIAVVHLP…LHGLFDSDAF (198 aa)) enclose the GATase cobBQ-type domain. C332 functions as the Nucleophile in the catalytic mechanism. Residue H440 is part of the active site.

The protein belongs to the CobB/CobQ family. CobQ subfamily.

Its pathway is cofactor biosynthesis; adenosylcobalamin biosynthesis. Catalyzes amidations at positions B, D, E, and G on adenosylcobyrinic A,C-diamide. NH(2) groups are provided by glutamine, and one molecule of ATP is hydrogenolyzed for each amidation. In Klebsiella pneumoniae subsp. pneumoniae (strain ATCC 700721 / MGH 78578), this protein is Cobyric acid synthase.